The chain runs to 484 residues: Acetaldehyde dehydrogenase (acetylating) (484 aa).

This sequence belongs to the aldehyde dehydrogenase family.

The enzyme catalyses acetaldehyde + NAD(+) + CoA = acetyl-CoA + NADH + H(+). The protein operates within organosulfur degradation; alkanesulfonate degradation. Functionally, involved in an anaerobic respiration pathway that converts the sulfonate taurine (2-aminoethanesulfonate) to ammonia, acetate and sulfide. Catalyzes the oxidation of acetaldehyde to acetyl-CoA in the presence of CoASH and NAD(+). Highly prefers NAD(+) over NADP(+). The sequence is that of Acetaldehyde dehydrogenase (acetylating) from Bilophila wadsworthia (strain 3_1_6).